Consider the following 322-residue polypeptide: ATP-dependent 6-phosphofructokinase (322 aa).

Residue Gly-11 participates in ATP binding. 21-25 contacts ADP; the sequence is RAVAR. Residues 72-73 and 102-105 each bind ATP; these read RY and GDGS. A Mg(2+)-binding site is contributed by Asp-103. 125 to 127 serves as a coordination point for substrate; sequence TID. The active-site Proton acceptor is the Asp-127. Arg-154 lines the ADP pocket. Residues Arg-162 and 169 to 171 each bind substrate; that span reads MGR. ADP contacts are provided by residues 185–187 and 213–215; these read GAD and KDY. Residues Glu-222, Arg-246, and 252–255 each bind substrate; that span reads HVQR.

Belongs to the phosphofructokinase type A (PFKA) family. ATP-dependent PFK group I subfamily. Prokaryotic clade 'B1' sub-subfamily. As to quaternary structure, homotetramer. Requires Mg(2+) as cofactor.

Its subcellular location is the cytoplasm. The enzyme catalyses beta-D-fructose 6-phosphate + ATP = beta-D-fructose 1,6-bisphosphate + ADP + H(+). It participates in carbohydrate degradation; glycolysis; D-glyceraldehyde 3-phosphate and glycerone phosphate from D-glucose: step 3/4. With respect to regulation, allosterically activated by ADP and other diphosphonucleosides, and allosterically inhibited by phosphoenolpyruvate. In terms of biological role, catalyzes the phosphorylation of D-fructose 6-phosphate to fructose 1,6-bisphosphate by ATP, the first committing step of glycolysis. In Pediococcus pentosaceus (strain ATCC 25745 / CCUG 21536 / LMG 10740 / 183-1w), this protein is ATP-dependent 6-phosphofructokinase.